Here is a 116-residue protein sequence, read N- to C-terminus: Small ribosomal subunit protein uS13m (116 aa).

Belongs to the universal ribosomal protein uS13 family. In terms of assembly, part of the small ribosomal subunit.

Its subcellular location is the mitochondrion. Functionally, located at the top of the head of the small subunit, it contacts several helices of the 18S rRNA. The polypeptide is Small ribosomal subunit protein uS13m (RPS13) (Nicotiana tabacum (Common tobacco)).